We begin with the raw amino-acid sequence, 210 residues long: Large ribosomal subunit protein uL4 (210 aa).

The tract at residues 46–89 (QGTASTLTRSEVRGGGRKPYKQKGTGRARQGSIRTPLRPGGGII) is disordered. Basic residues predominate over residues 60 to 71 (GGRKPYKQKGTG).

This sequence belongs to the universal ribosomal protein uL4 family. In terms of assembly, part of the 50S ribosomal subunit.

Its function is as follows. One of the primary rRNA binding proteins, this protein initially binds near the 5'-end of the 23S rRNA. It is important during the early stages of 50S assembly. It makes multiple contacts with different domains of the 23S rRNA in the assembled 50S subunit and ribosome. In terms of biological role, forms part of the polypeptide exit tunnel. This Prochlorococcus marinus (strain MIT 9312) protein is Large ribosomal subunit protein uL4.